Consider the following 335-residue polypeptide: Transcriptional activator NphR (335 aa).

The HTH araC/xylS-type domain occupies 231-329 (TRVQRVIEQN…GSSPGLYRKE (99 aa)). 2 DNA-binding regions (H-T-H motif) span residues 249–270 (SDIA…NAEG) and 296–319 (VADV…RSTF).

Transcriptional activator of nphA1 and nphA2 involved in the degradation of 4-nitrophenol (4-NP). The protein is Transcriptional activator NphR (nphR) of Rhodococcus sp.